Here is a 601-residue protein sequence, read N- to C-terminus: Leucine zipper putative tumor suppressor 1 (601 aa).

Residue glycine 2 is the site of N-myristoyl glycine attachment. Positions 135–190 are disordered; it reads GAILHSSPESTNHQLHPMPPDKPKEQELKPGLCSGALSDSGRNSMSSLPTHSTTSS. Positions 153–162 are enriched in basic and acidic residues; sequence PPDKPKEQEL. Over residues 174–190 the composition is skewed to polar residues; that stretch reads SGRNSMSSLPTHSTTSS. The stretch at 255 to 573 forms a coiled coil; it reads PLSTDECTIQ…RLEKALQQLA (319 aa).

This sequence belongs to the LZTS family. Binds EEF1G, TLK2 and CDK1. In terms of processing, phosphorylated on serine residues. Hyperphosphorylated by the cAMP-dependent kinase PKA during cell-cycle progression. As to expression, highly expressed in brain, in particular in cortex, the CA2 region of the hippocampus, olfactory bulb, striatum and pons. Not detectable in the other tissues tested.

The protein localises to the cytoplasm. Its subcellular location is the cell membrane. It is found in the cell projection. The protein resides in the dendritic spine. It localises to the postsynaptic density. The protein localises to the synapse. Its function is as follows. Involved in the regulation of cell growth. May stabilize the active CDC2-cyclin B1 complex and thereby contribute to the regulation of the cell cycle and the prevention of uncontrolled cell proliferation. May act as tumor suppressor. This Rattus norvegicus (Rat) protein is Leucine zipper putative tumor suppressor 1 (Lzts1).